We begin with the raw amino-acid sequence, 314 residues long: 4-hydroxy-3-methylbut-2-enyl diphosphate reductase (314 aa).

Cys-12 provides a ligand contact to [4Fe-4S] cluster. His-41 and His-74 together coordinate (2E)-4-hydroxy-3-methylbut-2-enyl diphosphate. Residues His-41 and His-74 each contribute to the dimethylallyl diphosphate site. Isopentenyl diphosphate is bound by residues His-41 and His-74. Cys-96 contacts [4Fe-4S] cluster. His-124 is a (2E)-4-hydroxy-3-methylbut-2-enyl diphosphate binding site. His-124 contributes to the dimethylallyl diphosphate binding site. His-124 contributes to the isopentenyl diphosphate binding site. The active-site Proton donor is the Glu-126. Thr-167 lines the (2E)-4-hydroxy-3-methylbut-2-enyl diphosphate pocket. Cys-197 contacts [4Fe-4S] cluster. 4 residues coordinate (2E)-4-hydroxy-3-methylbut-2-enyl diphosphate: Ser-225, Ser-226, Asn-227, and Ser-269. Ser-225, Ser-226, Asn-227, and Ser-269 together coordinate dimethylallyl diphosphate. Residues Ser-225, Ser-226, Asn-227, and Ser-269 each contribute to the isopentenyl diphosphate site.

It belongs to the IspH family. [4Fe-4S] cluster serves as cofactor.

The catalysed reaction is isopentenyl diphosphate + 2 oxidized [2Fe-2S]-[ferredoxin] + H2O = (2E)-4-hydroxy-3-methylbut-2-enyl diphosphate + 2 reduced [2Fe-2S]-[ferredoxin] + 2 H(+). The enzyme catalyses dimethylallyl diphosphate + 2 oxidized [2Fe-2S]-[ferredoxin] + H2O = (2E)-4-hydroxy-3-methylbut-2-enyl diphosphate + 2 reduced [2Fe-2S]-[ferredoxin] + 2 H(+). It functions in the pathway isoprenoid biosynthesis; dimethylallyl diphosphate biosynthesis; dimethylallyl diphosphate from (2E)-4-hydroxy-3-methylbutenyl diphosphate: step 1/1. Its pathway is isoprenoid biosynthesis; isopentenyl diphosphate biosynthesis via DXP pathway; isopentenyl diphosphate from 1-deoxy-D-xylulose 5-phosphate: step 6/6. Functionally, catalyzes the conversion of 1-hydroxy-2-methyl-2-(E)-butenyl 4-diphosphate (HMBPP) into a mixture of isopentenyl diphosphate (IPP) and dimethylallyl diphosphate (DMAPP). Acts in the terminal step of the DOXP/MEP pathway for isoprenoid precursor biosynthesis. The chain is 4-hydroxy-3-methylbut-2-enyl diphosphate reductase from Actinobacillus pleuropneumoniae serotype 5b (strain L20).